The following is a 163-amino-acid chain: Protein-export protein SecB (163 aa).

It belongs to the SecB family. As to quaternary structure, homotetramer, a dimer of dimers. One homotetramer interacts with 1 SecA dimer.

The protein localises to the cytoplasm. Functionally, one of the proteins required for the normal export of preproteins out of the cell cytoplasm. It is a molecular chaperone that binds to a subset of precursor proteins, maintaining them in a translocation-competent state. It also specifically binds to its receptor SecA. The polypeptide is Protein-export protein SecB (Burkholderia ambifaria (strain MC40-6)).